Reading from the N-terminus, the 295-residue chain is 4-hydroxy-tetrahydrodipicolinate synthase (295 aa).

Thr47 is a pyruvate binding site. Catalysis depends on Tyr135, which acts as the Proton donor/acceptor. The active-site Schiff-base intermediate with substrate is Lys163. Position 206 (Ile206) interacts with pyruvate.

The protein belongs to the DapA family. As to quaternary structure, homodimer.

It localises to the cytoplasm. The catalysed reaction is L-aspartate 4-semialdehyde + pyruvate = (2S,4S)-4-hydroxy-2,3,4,5-tetrahydrodipicolinate + H2O + H(+). It functions in the pathway amino-acid biosynthesis; L-lysine biosynthesis via DAP pathway; (S)-tetrahydrodipicolinate from L-aspartate: step 3/4. In terms of biological role, catalyzes the condensation of (S)-aspartate-beta-semialdehyde [(S)-ASA] and pyruvate to 4-hydroxy-tetrahydrodipicolinate (HTPA). This Staphylococcus aureus (strain MSSA476) protein is 4-hydroxy-tetrahydrodipicolinate synthase.